Here is a 339-residue protein sequence, read N- to C-terminus: Zinc metalloprotease MJ0392 (339 aa).

Helical transmembrane passes span I10 to G30 and I33 to L53. Zn(2+) is bound at residue H54. E55 is an active-site residue. H58 provides a ligand contact to Zn(2+). 2 helical membrane-spanning segments follow: residues I96–F116 and L125–F145. D148 is a Zn(2+) binding site. 2 helical membrane passes run I180–V200 and Y251–I271. CBS domains follow at residues M226–Y281 and Y281–E335.

This sequence belongs to the peptidase M50B family. As to quaternary structure, monomer. The cofactor is Zn(2+).

It is found in the cell membrane. With respect to regulation, inhibited by 1,10-phenanthroline. A site-2 regulated intramembrane protease (S2P) that cleaves type-2 transmembrane proteins within their membrane-spanning domains; its endogenous substrate is unknown. Regulated intramembrane proteolysis (RIP) occurs when an extracytoplasmic signal triggers a concerted proteolytic cascade to transmit information and elicit cellular responses. A membrane-spanning regulatory substrate protein is first cut extracytoplasmically (site-1 protease, S1P), then within the membrane itself (site-2 protease, S2P, this enzyme), while cytoplasmic proteases finish degrading the regulatory protein, liberating the effector protein. Possible signals, S1P and substrates are unknown in this organism. This is Zinc metalloprotease MJ0392 from Methanocaldococcus jannaschii (strain ATCC 43067 / DSM 2661 / JAL-1 / JCM 10045 / NBRC 100440) (Methanococcus jannaschii).